The primary structure comprises 210 residues: Nucleoside triphosphate pyrophosphatase (210 aa).

D79 acts as the Proton acceptor in catalysis.

This sequence belongs to the Maf family. A divalent metal cation serves as cofactor.

The protein localises to the cytoplasm. The catalysed reaction is a ribonucleoside 5'-triphosphate + H2O = a ribonucleoside 5'-phosphate + diphosphate + H(+). The enzyme catalyses a 2'-deoxyribonucleoside 5'-triphosphate + H2O = a 2'-deoxyribonucleoside 5'-phosphate + diphosphate + H(+). Its function is as follows. Nucleoside triphosphate pyrophosphatase. May have a dual role in cell division arrest and in preventing the incorporation of modified nucleotides into cellular nucleic acids. The sequence is that of Nucleoside triphosphate pyrophosphatase from Mycolicibacterium paratuberculosis (strain ATCC BAA-968 / K-10) (Mycobacterium paratuberculosis).